The chain runs to 117 residues: Ribulose bisphosphate carboxylase small subunit 1 (117 aa).

It belongs to the RuBisCO small chain family. As to quaternary structure, heterohexadecamer of 8 large and 8 small subunits.

Functionally, ruBisCO catalyzes two reactions: the carboxylation of D-ribulose 1,5-bisphosphate, the primary event in carbon dioxide fixation, as well as the oxidative fragmentation of the pentose substrate. Both reactions occur simultaneously and in competition at the same active site. Although the small subunit is not catalytic it is essential for maximal activity. The polypeptide is Ribulose bisphosphate carboxylase small subunit 1 (Hydrogenovibrio marinus).